Reading from the N-terminus, the 337-residue chain is Protein-methionine-sulfoxide reductase catalytic subunit MsrP (337 aa).

The segment at residues 1–48 (MLIKIPSRSDCSESEVTSETLYLSRRRLLGASFAGLALASGLPRLGFA) is a signal peptide (tat-type signal). Residues Asn-94, 97–98 (YE), Cys-152, Thr-187, Asn-237, Arg-242, and 253–255 (SIK) contribute to the Mo-molybdopterin site.

Belongs to the MsrP family. In terms of assembly, heterodimer of a catalytic subunit (MsrP) and a heme-binding subunit (MsrQ). Mo-molybdopterin is required as a cofactor. Post-translationally, predicted to be exported by the Tat system. The position of the signal peptide cleavage has not been experimentally proven.

It localises to the periplasm. It carries out the reaction L-methionyl-[protein] + a quinone + H2O = L-methionyl-(S)-S-oxide-[protein] + a quinol. The enzyme catalyses L-methionyl-[protein] + a quinone + H2O = L-methionyl-(R)-S-oxide-[protein] + a quinol. Its function is as follows. Part of the MsrPQ system that repairs oxidized periplasmic proteins containing methionine sulfoxide residues (Met-O), using respiratory chain electrons. Thus protects these proteins from oxidative-stress damage caused by reactive species of oxygen and chlorine generated by the host defense mechanisms. MsrPQ is essential for the maintenance of envelope integrity under bleach stress, rescuing a wide series of structurally unrelated periplasmic proteins from methionine oxidation. The catalytic subunit MsrP is non-stereospecific, being able to reduce both (R-) and (S-) diastereoisomers of methionine sulfoxide. In Pseudomonas aeruginosa (strain ATCC 15692 / DSM 22644 / CIP 104116 / JCM 14847 / LMG 12228 / 1C / PRS 101 / PAO1), this protein is Protein-methionine-sulfoxide reductase catalytic subunit MsrP.